Reading from the N-terminus, the 348-residue chain is tRNA pseudouridine synthase D (348 aa).

Residue phenylalanine 27 participates in substrate binding. Residue aspartate 80 is the Nucleophile of the active site. Substrate is bound at residue asparagine 129. The TRUD domain maps to 155–303 (GVPNYFGSQR…VEPARRAVLL (149 aa)). A substrate-binding site is contributed by phenylalanine 329.

Belongs to the pseudouridine synthase TruD family.

The catalysed reaction is uridine(13) in tRNA = pseudouridine(13) in tRNA. Responsible for synthesis of pseudouridine from uracil-13 in transfer RNAs. This chain is tRNA pseudouridine synthase D, found in Pectobacterium atrosepticum (strain SCRI 1043 / ATCC BAA-672) (Erwinia carotovora subsp. atroseptica).